The chain runs to 1394 residues: Leucine-rich PPR motif-containing protein, mitochondrial (1394 aa).

Residues 1–59 (MAALLRSARWLLRAGAAPRLPLSLRLLPGGPGRLHAASYLPAARAGPVAGGLLSPARLY) constitute a mitochondrion transit peptide. PPR repeat units lie at residues 126-160 (LLRSCGSLLPELKLEERTEFAHRIWDTLQKLGAVY), 161-195 (DVSHYNALLKVYLQNEYKFSPTDFLAKMEEANIQP), 196-230 (NRVTYQRLIASYCNVGDIEGASKILGFMKTKDLPV), 231-265 (TEAVFSALVTGHARAGDMENAENILTVMRDAGIEP), 266-300 (GPDTYLALLNAYAEKGDIDHVKQTLEKVEKSELHL), 301-335 (MDRDLLQIIFSFSKAGYPQYVSEILEKVTCERRYI), 403-437 (HSFPLQFTLHCALLANKTDLAKALMKAVKEEGFPI), and 438-472 (RPHYFWPLLVGRRKEKNVQGIIEILKGMQELGVHP). N6-acetyllysine occurs at positions 155, 187, and 226. Lys-292 carries the post-translational modification N6-acetyllysine. Residues Lys-463 and Lys-613 each carry the N6-acetyllysine modification. 6 PPR repeats span residues 678 to 709 (IRDVLKQLILVLCSEENMQKALELKAKYESDM), 710 to 746 (VTGGYAALINLCCRHDKVEDALNLKEEFDRLDSSAVL), 747 to 784 (DTGKYVGLVRVLAKHGKLQDAINILKEMKEKDVLIKDT), 785 to 820 (TALSFFHMLNGAALRGEIETVKQLHEAIVTLGLAEP), 821 to 856 (STNISFPLVTVHLEKGDLSTALEVAIDCYEKYKVLP), and 954 to 988 (RDQMYYNLLKLYKINGDWQRADAVWNKIQEENVIP). An interaction with BECN1 and Aedes aegypti venom allergen-1 region spans residues 712–1067 (GGYAALINLC…AKEQNIVFNA (356 aa)). Residues Lys-726 and Lys-750 each carry the N6-acetyllysine modification. A phosphoserine mark is found at Ser-1026, Ser-1027, and Ser-1029. PPR repeat units follow at residues 1031–1065 (TEPDFQKDILIACRLNQKKGAYDIFLNAKEQNIVF), 1066–1102 (NAETYSNLIKLLMSEDYFTQAMEVKAFAETHIKGFTL), 1103–1137 (NDAANSRLIITQVRRDYLKEAVTTLKTVLDQQQTP), 1138–1175 (SRLAVTRVIQALAMKGDVENIEVVQKMLNGLEDSIGLS), 1176–1210 (KMVFINNIALAQIKNNNIDAAIENIENMLTSENKV), and 1317–1351 (KEEAYNSLMKSYVSEKDVTSAKALYEHLTAKNTKL). The tract at residues 1121–1394 (KEAVTTLKTV…QLRKLRENSS (274 aa)) is RNA-binding. The residue at position 1136 (Thr-1136) is a Phosphothreonine. Ser-1138 bears the Phosphoserine mark.

Component of mRNP complexes associated with HNRPA1. Component of the complex, at least composed of LRPPRC, BECN1 and BCL2; the interactions prevent BECN1 from forming an autophagy-inducing complex with PIK3C3. Interacts with CECR2, HEBP2, MAP1S and UXT. Interacts with PPARGC1A. Interacts with FOXO1. Interacts (via N-terminus) with EIF4E; the interaction promotes association of EIF4E with 4ESE-containing mRNAs. Interacts with exportin XPO1/CRM1; interacts both alone and in complex with EIF4E and 4ESE-containing mRNAs to form an EIF4E-dependent mRNA export complex. Interacts with importin IPO8; the interaction occurs when LRPPRC is in its RNA-free form and returns LRPPRC to the nucleus for further export rounds. Interacts with BECN1. Interacts with Aedes aegypti venom allergen-1; the interaction interrupts BECN1 and LRPPRC association. Expressed ubiquitously. Expression is highest in heart, skeletal muscle, kidney and liver, intermediate in brain, non-mucosal colon, spleen and placenta, and lowest in small intestine, thymus, lung and peripheral blood leukocytes.

It localises to the mitochondrion. Its subcellular location is the nucleus. The protein resides in the nucleoplasm. The protein localises to the nucleus inner membrane. It is found in the nucleus outer membrane. Functionally, may play a role in RNA metabolism in both nuclei and mitochondria. In the nucleus binds to HNRPA1-associated poly(A) mRNAs and is part of nmRNP complexes at late stages of mRNA maturation which are possibly associated with nuclear mRNA export. Positively modulates nuclear export of mRNAs containing the EIF4E sensitivity element (4ESE) by binding simultaneously to both EIF4E and the 4ESE and acting as a platform for assembly for the RNA export complex. Also binds to exportin XPO1/CRM1 to engage the nuclear pore and traffic the bound mRNAs to the cytoplasm. May bind mature mRNA in the nucleus outer membrane. In mitochondria binds to poly(A) mRNA. Plays a role in translation or stability of mitochondrially encoded cytochrome c oxidase (COX) subunits. May be involved in transcription regulation. Cooperates with PPARGC1A to regulate certain mitochondrially encoded genes and gluconeogenic genes and may regulate docking of PPARGC1A to transcription factors. Seems to be involved in the transcription regulation of the multidrug-related genes MDR1 and MVP. Part of a nuclear factor that binds to the invMED1 element of MDR1 and MVP gene promoters. Binds single-stranded DNA. Required for maintaining mitochondrial potential. Suppresses the initiation of basal levels of autophagy and mitophagy by sustaining BCL2 levels. The chain is Leucine-rich PPR motif-containing protein, mitochondrial (LRPPRC) from Homo sapiens (Human).